A 54-amino-acid chain; its full sequence is Large ribosomal subunit protein bL33A (54 aa).

It belongs to the bacterial ribosomal protein bL33 family.

This chain is Large ribosomal subunit protein bL33A, found in Mycobacterium marinum (strain ATCC BAA-535 / M).